The primary structure comprises 863 residues: Ribosomal protein S6 kinase alpha-5 (863 aa).

The segment covering M1–G21 has biased composition (gly residues). Residues M1–E22 form a disordered region. The Protein kinase 1 domain occupies F48 to F317. Residues L54–V62 and K80 contribute to the ATP site. The active-site Proton acceptor is D176. S211 carries the phosphoserine; by autocatalysis modification. Positions E318–N386 constitute an AGC-kinase C-terminal domain. S359 carries the phosphoserine; by MAPK1, MAPK3 and MAPK14 modification. Phosphoserine; by autocatalysis occurs at positions 375 and 380. One can recognise a Protein kinase 2 domain in the interval D428–I675. ATP is bound by residues L431–R440 and K454. D608 (proton acceptor) is an active-site residue. T645 carries the phosphothreonine; by MAPK1, MAPK3 and MAPK14 modification. Phosphoserine occurs at positions 711, 721, 755, and 759. T764 is subject to Phosphothreonine. A disordered region spans residues A805–D863. The span at T813–S832 shows a compositional bias: low complexity. A phosphoserine; by autocatalysis mark is found at S814, S816, and S822. Polar residues predominate over residues Q833 to D863. The residue at position 862 (S862) is a Phosphoserine.

This sequence belongs to the protein kinase superfamily. AGC Ser/Thr protein kinase family. S6 kinase subfamily. Forms a complex with either MAPK1/ERK2 or MAPK3/ERK1 in quiescent cells which transiently dissociates following mitogenic stimulation. Also associates with MAPK14/p38-alpha. Activated RPS6KA5 associates with and phosphorylates the NF-kappa-B p65 subunit RELA. Interacts with CREBBP and EP300. It depends on Mg(2+) as a cofactor. In terms of processing, ser-375 and Thr-645 phosphorylation is required for kinase activity. Ser-375 and Ser-211 are autophosphorylated by the C-terminal kinase domain, and their phosphorylation is essential for the catalytic activity of the N-terminal kinase domain. Phosphorylated at Ser-359, Thr-645 and Thr-764 by MAPK1/ERK2, MAPK3/ERK1 and MAPK14/p38-alpha. Autophosphorylated at Ser-814, Ser-816 and Ser-822 by the N-terminal kinase domain. Ubiquitinated.

The protein localises to the nucleus. It carries out the reaction L-seryl-[protein] + ATP = O-phospho-L-seryl-[protein] + ADP + H(+). It catalyses the reaction L-threonyl-[protein] + ATP = O-phospho-L-threonyl-[protein] + ADP + H(+). With respect to regulation, activated by phosphorylation at Ser-359, Thr-645 and Thr-764 by MAPK1/ERK2, MAPK3/ERK1 and MAPK14/p38-alpha, and by further autophosphorylation of Ser-211, Ser-375 and Ser-380 by the activated C-terminal kinase domain. The active N-terminal kinase domain finally phosphorylates downstream substrates, as well as Ser-814, Ser-816 and Ser-822 in its own C-terminal region. In terms of biological role, serine/threonine-protein kinase that is required for the mitogen or stress-induced phosphorylation of the transcription factors CREB1 and ATF1 and for the regulation of the transcription factors RELA, STAT3 and ETV1/ER81, and that contributes to gene activation by histone phosphorylation and functions in the regulation of inflammatory genes. Phosphorylates CREB1 and ATF1 in response to mitogenic or stress stimuli such as UV-C irradiation, epidermal growth factor (EGF) and anisomycin. Plays an essential role in the control of RELA transcriptional activity in response to TNF and upon glucocorticoid, associates in the cytoplasm with the glucocorticoid receptor NR3C1 and contributes to RELA inhibition and repression of inflammatory gene expression. In skeletal myoblasts is required for phosphorylation of RELA at 'Ser-276' during oxidative stress. In erythropoietin-stimulated cells, is necessary for the 'Ser-727' phosphorylation of STAT3 and regulation of its transcriptional potential. Phosphorylates ETV1/ER81 at 'Ser-191' and 'Ser-216', and thereby regulates its ability to stimulate transcription, which may be important during development and breast tumor formation. Directly represses transcription via phosphorylation of 'Ser-1' of histone H2A. Phosphorylates 'Ser-10' of histone H3 in response to mitogenics, stress stimuli and EGF, which results in the transcriptional activation of several immediate early genes, including proto-oncogenes c-fos/FOS and c-jun/JUN. May also phosphorylate 'Ser-28' of histone H3. Mediates the mitogen- and stress-induced phosphorylation of high mobility group protein 1 (HMGN1/HMG14). In lipopolysaccharide-stimulated primary macrophages, acts downstream of the Toll-like receptor TLR4 to limit the production of pro-inflammatory cytokines. Functions probably by inducing transcription of the MAP kinase phosphatase DUSP1 and the anti-inflammatory cytokine interleukin 10 (IL10), via CREB1 and ATF1 transcription factors. Plays a role in neuronal cell death by mediating the downstream effects of excitotoxic injury. Phosphorylates TRIM7 at 'Ser-106' in response to growth factor signaling via the MEK/ERK pathway, thereby stimulating its ubiquitin ligase activity. The polypeptide is Ribosomal protein S6 kinase alpha-5 (Rps6ka5) (Mus musculus (Mouse)).